The sequence spans 159 residues: 2-C-methyl-D-erythritol 2,4-cyclodiphosphate synthase (159 aa).

Asp10 and His12 together coordinate a divalent metal cation. Residues 10–12 (DVH) and 36–37 (HS) each bind 4-CDP-2-C-methyl-D-erythritol 2-phosphate. His44 is a binding site for a divalent metal cation. 4-CDP-2-C-methyl-D-erythritol 2-phosphate-binding positions include 58-60 (DIG), 63-67 (FANTD), 134-137 (TTNE), and Arg144.

Belongs to the IspF family. As to quaternary structure, homotrimer. It depends on a divalent metal cation as a cofactor.

It carries out the reaction 4-CDP-2-C-methyl-D-erythritol 2-phosphate = 2-C-methyl-D-erythritol 2,4-cyclic diphosphate + CMP. It functions in the pathway isoprenoid biosynthesis; isopentenyl diphosphate biosynthesis via DXP pathway; isopentenyl diphosphate from 1-deoxy-D-xylulose 5-phosphate: step 4/6. Involved in the biosynthesis of isopentenyl diphosphate (IPP) and dimethylallyl diphosphate (DMAPP), two major building blocks of isoprenoid compounds. Catalyzes the conversion of 4-diphosphocytidyl-2-C-methyl-D-erythritol 2-phosphate (CDP-ME2P) to 2-C-methyl-D-erythritol 2,4-cyclodiphosphate (ME-CPP) with a corresponding release of cytidine 5-monophosphate (CMP). The chain is 2-C-methyl-D-erythritol 2,4-cyclodiphosphate synthase from Cytophaga hutchinsonii (strain ATCC 33406 / DSM 1761 / CIP 103989 / NBRC 15051 / NCIMB 9469 / D465).